A 761-amino-acid polypeptide reads, in one-letter code: MMMWQRYARGAPRSLTSLSFGKASRISTVKPVLRSRMPVHQRLQTLSGLATRNTIHRSTQIRSFHISWTRLNENRPNKEGEGKNNGNKDNNSNKEDGKDKRNEFGSLSEYFRSKEFANTMFLTIGFTIIFTLLTPSSNNSGDDSNRVLTFQDFKTKYLEKGLVSKIYVVNKFLVEAELVNTKQVVSFTIGSVDIFEEQMDQIQDLLNIPPRDRIPIKYIERSSPFTFLFPFLPTIILLGGLYFITRKINSSPPNANGGGGGGLGGMFNVGKSRAKLFNKETDIKISFKNVAGCDEAKQEIMEFVHFLKNPGKYTKLGAKIPRGAILSGPPGTGKTLLAKATAGEANVPFLSVSGSEFVEMFVGVGASRVRDLFTQARSMAPSIIFIDEIDAIGKERGKGGALGGANDEREATLNQLLVEMDGFTTSDQVVVLAGTNRPDVLDNALMRPGRFDRHIQIDSPDVNGRQQIYLVHLKRLNLDPLLTDDMNNLSGKLATLTPGFTGADIANACNEAALIAARHNDPYITIHHFEQAIERVIAGLEKKTRVLSKEEKRSVAYHEAGHAVCGWFLKYADPLLKVSIIPRGQGALGYAQYLPPDQYLISEEQFRHRMIMALGGRVSEELHFPSVTSGAHDDFKKVTQMANAMVTSLGMSPKIGYLSFDQNDGNFKVNKPFSNKTARTIDLEVKSIVDDAHRACTELLTKNLDKVDLVAKELLRKEAITREDMIRLLGPRPFKERNEAFEKYLDPKSNTEPPEAPAATN.

Residues 1–115 (MMMWQRYARG…SLSEYFRSKE (115 aa)) are Mitochondrial matrix-facing. Residues 67–101 (SWTRLNENRPNKEGEGKNNGNKDNNSNKEDGKDKR) form a disordered region. Basic and acidic residues-rich tracts occupy residues 72-82 (NENRPNKEGEG) and 91-101 (NSNKEDGKDKR). A helical transmembrane segment spans residues 116 to 136 (FANTMFLTIGFTIIFTLLTPS). Residues 137-223 (SNNSGDDSNR…IPIKYIERSS (87 aa)) are Mitochondrial intermembrane-facing. The chain crosses the membrane as a helical span at residues 224–244 (PFTFLFPFLPTIILLGGLYFI). Residues 245 to 761 (TRKINSSPPN…EPPEAPAATN (517 aa)) are Mitochondrial matrix-facing. The ATP site is built by Val-290, Ala-291, Thr-332, Gly-333, Lys-334, Thr-335, Leu-336, and His-472. A Zn(2+)-binding site is contributed by His-558. The active site involves Glu-559. Zn(2+) is bound by residues His-562 and Asp-634.

It in the N-terminal section; belongs to the AAA ATPase family. The protein in the C-terminal section; belongs to the peptidase M41 family. Component of the 850 kDa m-AAA protease complex, a heterohexamer composed of YTA12/RCA1 and YTA10/AFG3. Associates with the prohibitin complex, composed of PHB1 and PHB2, inhibiting the activity of the m-AAA protease complex. Zn(2+) serves as cofactor.

It is found in the mitochondrion inner membrane. It carries out the reaction ATP + H2O = ADP + phosphate + H(+). With respect to regulation, ATP hydrolysis is coordinated within m-AAA protease ring complexes: ATP-binding to YTA10/AFG3 inhibits ATP hydrolysis by the neighboring subunit YTA12/RCA1, leading to coordinated ATP hydrolysis within the AAA ATPase ring. In terms of biological role, catalytic component of the m-AAA protease, a protease that plays a key role in proteostasis of inner mitochondrial membrane proteins. YTA10/AFG3 possesses both ATPase and protease activities: the ATPase activity is required to unfold substrates, threading them into the internal proteolytic cavity for hydrolysis into small peptide fragments. The complex is necessary for the assembly of mitochondrial respiratory chain and ATPase complexes. The m-AAA protease carries out protein quality control in the inner membrane of the mitochondria by mediating degradation of mistranslated or misfolded polypeptides. It also mediates protein maturation of the mitochondrial ribosomal subunit MRPL32/bL32m by catalyzing the cleavage of the presequence of MRPL32/bL32m prior to assembly into the mitochondrial ribosome. Promotes maturation of cytochrome c peroxidase (CCP1) by acting as a membrane protein dislocase via its ATPase activity: pulls the CCP1 transmembrane to the matrix prior to processing by the rhomboid protease PCP1. The membrane protein dislocase activity is also required to dislocate moderately hydrophobic transmembrane segments from the membrane. The polypeptide is Mitochondrial inner membrane m-AAA protease component YTA10 (Saccharomyces cerevisiae (strain ATCC 204508 / S288c) (Baker's yeast)).